The primary structure comprises 124 residues: MRLLVQKVILIYLARYAKSMKEIQYYGPADVLPFARIAEFLWVYVGSALAYVVGVKFMGTVRFILFQIVNNSLRTFAWYLKEVFRLGALALITIARAFCVAHINIIIINQVFFLWEMFELKLYL.

Positions 1 to 19 are cleaved as a signal peptide; it reads MRLLVQKVILIYLARYAKS. 2 helical membrane passes run 37–57 and 86–108; these read IAEF…GVKF and LGAL…IIII.

It localises to the membrane. This is an uncharacterized protein from Saccharomyces cerevisiae (strain ATCC 204508 / S288c) (Baker's yeast).